Here is a 640-residue protein sequence, read N- to C-terminus: Threonine--tRNA ligase (640 aa).

In terms of domain architecture, TGS spans 1–61 (MPTITLPDGS…ENDASLQIIT (61 aa)). Residues 242 to 533 (DHRKIGKRLG…LIEHYEGAFP (292 aa)) are catalytic. 3 residues coordinate Zn(2+): Cys333, His384, and His510.

It belongs to the class-II aminoacyl-tRNA synthetase family. As to quaternary structure, homodimer. Requires Zn(2+) as cofactor.

Its subcellular location is the cytoplasm. It catalyses the reaction tRNA(Thr) + L-threonine + ATP = L-threonyl-tRNA(Thr) + AMP + diphosphate + H(+). Its function is as follows. Catalyzes the attachment of threonine to tRNA(Thr) in a two-step reaction: L-threonine is first activated by ATP to form Thr-AMP and then transferred to the acceptor end of tRNA(Thr). Also edits incorrectly charged L-seryl-tRNA(Thr). The protein is Threonine--tRNA ligase of Pseudomonas syringae pv. tomato (strain ATCC BAA-871 / DC3000).